The following is a 1032-amino-acid chain: Caspase recruitment domain-containing protein 10 (1032 aa).

Disordered regions lie at residues 1-23 (MPGR…SEAE), 253-276 (RARG…EPDN), and 481-553 (EFPS…MSDI). Serine 18 is modified (phosphoserine). One can recognise a CARD domain in the interval 23–115 (EEDALWERIE…EHFTLLTGQE (93 aa)). A coiled-coil region spans residues 138 to 456 (TEVRRLREAR…LEVQLQRAQG (319 aa)). 2 stretches are compositionally biased toward basic and acidic residues: residues 261–276 (AEEK…EPDN) and 504–517 (HNSE…KEIN).

In terms of assembly, CARD10 and BCL10 bind to each other by CARD-CARD interaction. They both participate in a complex with MALT1, where MALT1 binds to BCL10. Interacts with TMEM43; this interaction is essential for EGFR-mediated NF-kappa-B activation. Detected in adult heart, kidney and liver; lower levels in intestine, placenta, muscle and lung. Also found in fetal lung, liver and kidney.

Its subcellular location is the cytoplasm. Its function is as follows. Scaffold protein that plays an important role in mediating the activation of NF-kappa-B via BCL10 or EGFR. The protein is Caspase recruitment domain-containing protein 10 (CARD10) of Homo sapiens (Human).